The sequence spans 179 residues: Ubiquitin-conjugating enzyme E2 C (179 aa).

N-acetylalanine is present on A2. At S3 the chain carries Phosphoserine. A UBC core domain is found at 30-175 (PVGKRLQQEL…LQETYSKQVS (146 aa)). C114 functions as the Glycyl thioester intermediate in the catalytic mechanism.

The protein belongs to the ubiquitin-conjugating enzyme family. In terms of assembly, component of the APC/C complex, composed of at least 14 distinct subunits that assemble into a complex of at least 19 chains with a combined molecular mass of around 1.2 MDa. Within this complex, directly interacts with ANAPC2. In terms of processing, autoubiquitinated by the APC/C complex, leading to its degradation by the proteasome. Its degradation plays a central role in APC/C regulation, allowing cyclin-A accumulation before S phase entry. APC/C substrates inhibit the autoubiquitination of UBE2C/UBCH10 but not its E2 function, hence APC/C remaining active until its substrates have been destroyed.

It catalyses the reaction S-ubiquitinyl-[E1 ubiquitin-activating enzyme]-L-cysteine + [E2 ubiquitin-conjugating enzyme]-L-cysteine = [E1 ubiquitin-activating enzyme]-L-cysteine + S-ubiquitinyl-[E2 ubiquitin-conjugating enzyme]-L-cysteine.. The enzyme catalyses S-ubiquitinyl-[E1 ubiquitin-activating enzyme]-L-cysteine + [acceptor protein]-L-lysine = [E1 ubiquitin-activating enzyme]-L-cysteine + N(6)-monoubiquitinyl-[acceptor protein]-L-lysine.. It functions in the pathway protein modification; protein ubiquitination. Functionally, accepts ubiquitin from the E1 complex and catalyzes its covalent attachment to other proteins. In vitro catalyzes 'Lys-11'- and 'Lys-48'-linked polyubiquitination. Acts as an essential factor of the anaphase promoting complex/cyclosome (APC/C), a cell cycle-regulated ubiquitin ligase that controls progression through mitosis. Acts by initiating 'Lys-11'-linked polyubiquitin chains on APC/C substrates, leading to the degradation of APC/C substrates by the proteasome and promoting mitotic exit. This is Ubiquitin-conjugating enzyme E2 C (Ube2c) from Mus musculus (Mouse).